The primary structure comprises 36 residues: Gloverin (36 aa).

It is found in the secreted. Its function is as follows. Antibacterial protein. The polypeptide is Gloverin (Heliothis virescens (Tobacco budworm moth)).